The following is a 197-amino-acid chain: Ribonuclease HII (197 aa).

In terms of domain architecture, RNase H type-2 spans 14–197 (EKIVGIDEAG…RSFNLGVNDD (184 aa)). Residues Asp-20, Glu-21, and Asp-112 each coordinate a divalent metal cation.

It belongs to the RNase HII family. The cofactor is Mn(2+). It depends on Mg(2+) as a cofactor.

It localises to the cytoplasm. It carries out the reaction Endonucleolytic cleavage to 5'-phosphomonoester.. Its function is as follows. Endonuclease that specifically degrades the RNA of RNA-DNA hybrids. In Sulfurihydrogenibium sp. (strain YO3AOP1), this protein is Ribonuclease HII.